The following is a 452-amino-acid chain: Cobyrinate a,c-diamide synthase (452 aa).

Residues 248–441 (RVAYALDAAF…LHIHFYQNPA (194 aa)) enclose the GATase cobBQ-type domain. C330 serves as the catalytic Nucleophile.

The protein belongs to the CobB/CbiA family. Mg(2+) is required as a cofactor.

It catalyses the reaction cob(II)yrinate + 2 L-glutamine + 2 ATP + 2 H2O = cob(II)yrinate a,c diamide + 2 L-glutamate + 2 ADP + 2 phosphate + 2 H(+). It participates in cofactor biosynthesis; adenosylcobalamin biosynthesis; cob(II)yrinate a,c-diamide from sirohydrochlorin (anaerobic route): step 10/10. Its function is as follows. Catalyzes the ATP-dependent amidation of the two carboxylate groups at positions a and c of cobyrinate, using either L-glutamine or ammonia as the nitrogen source. This chain is Cobyrinate a,c-diamide synthase, found in Listeria innocua serovar 6a (strain ATCC BAA-680 / CLIP 11262).